We begin with the raw amino-acid sequence, 100 residues long: Urease subunit gamma (100 aa).

Belongs to the urease gamma subunit family. As to quaternary structure, heterotrimer of UreA (gamma), UreB (beta) and UreC (alpha) subunits. Three heterotrimers associate to form the active enzyme.

Its subcellular location is the cytoplasm. The enzyme catalyses urea + 2 H2O + H(+) = hydrogencarbonate + 2 NH4(+). It participates in nitrogen metabolism; urea degradation; CO(2) and NH(3) from urea (urease route): step 1/1. The polypeptide is Urease subunit gamma (Haemophilus influenzae (strain PittGG)).